The following is a 126-amino-acid chain: Fluoride-specific ion channel FluC (126 aa).

A run of 4 helical transmembrane segments spans residues 6 to 26, 36 to 56, 69 to 89, and 99 to 119; these read FVAVGVGAAAGAWLRWGFSVL, YGTLAANLLGGYLIGLAVGFF, LAITGFLGGLTTFSTFSSEVV, and WAAMHLLLHLGGSLLLTALGL. Residues Gly76 and Thr79 each coordinate Na(+).

It belongs to the fluoride channel Fluc/FEX (TC 1.A.43) family.

Its subcellular location is the cell inner membrane. The enzyme catalyses fluoride(in) = fluoride(out). With respect to regulation, na(+) is not transported, but it plays an essential structural role and its presence is essential for fluoride channel function. Its function is as follows. Fluoride-specific ion channel. Important for reducing fluoride concentration in the cell, thus reducing its toxicity. This Cupriavidus taiwanensis (strain DSM 17343 / BCRC 17206 / CCUG 44338 / CIP 107171 / LMG 19424 / R1) (Ralstonia taiwanensis (strain LMG 19424)) protein is Fluoride-specific ion channel FluC.